The following is a 317-amino-acid chain: Melanocyte-stimulating hormone receptor (317 aa).

Over 1–37 (MPVLGSQRRLLGSLNCTPPATFSLTLAPNRTGPQCLE) the chain is Extracellular. N-linked (GlcNAc...) asparagine glycosylation is present at N29. Residues 38-63 (VSIPDGLFLSLGLVSLVENVLVVAAI) traverse the membrane as a helical segment. Topologically, residues 64-72 (AKNRNLHSP) are cytoplasmic. The chain crosses the membrane as a helical span at residues 73–93 (MYYFICCLAVSDLLVSVSNVL). Over 94-118 (ETAVMLLLEAGALAARAAVVQQLDN) the chain is Extracellular. Residues 119-140 (VIDVLICGSMVSSLCFLGAIAM) traverse the membrane as a helical segment. At 141–163 (DRYISIFYALRYHSVVTLPRAWR) the chain is on the cytoplasmic side. A helical transmembrane segment spans residues 164 to 183 (IIAAIWVASILTSLLFITYY). The Extracellular portion of the chain corresponds to 184-191 (NHTVVLLC). A helical transmembrane segment spans residues 192 to 211 (LVGFFIAMLALMAILYVHML). Topologically, residues 212–240 (ARACQHARDIARLQKRQHPIHQGFGLKGA) are cytoplasmic. A helical membrane pass occupies residues 241 to 266 (ATLTILLGVFFLCWGPFFLHLSLIVL). The Extracellular portion of the chain corresponds to 267–279 (CPQHPTCGCIFKN). The helical transmembrane segment at 280–300 (FNLFLALIICNAIVDPLIYAF) threads the bilayer. Residues 301 to 317 (RSQELRKTLQEVLQCSW) lie on the Cytoplasmic side of the membrane. C315 is lipidated: S-palmitoyl cysteine.

It belongs to the G-protein coupled receptor 1 family. Interacts with MGRN1, but does not undergo MGRN1-mediated ubiquitination; this interaction competes with GNAS-binding and thus inhibits agonist-induced cAMP production. Interacts with OPN3; the interaction results in a decrease in MC1R-mediated cAMP signaling and ultimately a decrease in melanin production in melanocytes.

It is found in the cell membrane. Receptor for MSH (alpha, beta and gamma) and ACTH. The activity of this receptor is mediated by G proteins which activate adenylate cyclase. Mediates melanogenesis, the production of eumelanin (black/brown) and phaeomelanin (red/yellow), via regulation of cAMP signaling in melanocytes. This is Melanocyte-stimulating hormone receptor (MC1R) from Alces alces alces (European moose).